We begin with the raw amino-acid sequence, 269 residues long: Thymidylate synthase (269 aa).

R26 lines the dUMP pocket. (6R)-5,10-methylene-5,6,7,8-tetrahydrofolate is bound at residue H56. R131 to R132 contributes to the dUMP binding site. Residue C151 is the Nucleophile of the active site. DUMP-binding positions include R171–D174, N182, and H212–Y214. D174 is a (6R)-5,10-methylene-5,6,7,8-tetrahydrofolate binding site. A268 contributes to the (6R)-5,10-methylene-5,6,7,8-tetrahydrofolate binding site.

It belongs to the thymidylate synthase family. Bacterial-type ThyA subfamily. As to quaternary structure, homodimer.

The protein localises to the cytoplasm. It carries out the reaction dUMP + (6R)-5,10-methylene-5,6,7,8-tetrahydrofolate = 7,8-dihydrofolate + dTMP. Its pathway is pyrimidine metabolism; dTTP biosynthesis. Its function is as follows. Catalyzes the reductive methylation of 2'-deoxyuridine-5'-monophosphate (dUMP) to 2'-deoxythymidine-5'-monophosphate (dTMP) while utilizing 5,10-methylenetetrahydrofolate (mTHF) as the methyl donor and reductant in the reaction, yielding dihydrofolate (DHF) as a by-product. This enzymatic reaction provides an intracellular de novo source of dTMP, an essential precursor for DNA biosynthesis. In Leifsonia xyli subsp. xyli (strain CTCB07), this protein is Thymidylate synthase.